The following is a 212-amino-acid chain: Thymidylate kinase (212 aa).

ATP is bound at residue 10–17 (GLEGAGKT).

It belongs to the thymidylate kinase family.

The enzyme catalyses dTMP + ATP = dTDP + ADP. Phosphorylation of dTMP to form dTDP in both de novo and salvage pathways of dTTP synthesis. The protein is Thymidylate kinase of Baumannia cicadellinicola subsp. Homalodisca coagulata.